The chain runs to 211 residues: 3,4-dihydroxy-2-butanone 4-phosphate synthase (211 aa).

Residues 37–38 (RE), D42, 150–154 (RGGHT), and E174 contribute to the D-ribulose 5-phosphate site. E38 is a binding site for Mg(2+). H153 is a binding site for Mg(2+).

Belongs to the DHBP synthase family. In terms of assembly, homodimer. Mg(2+) is required as a cofactor. Mn(2+) serves as cofactor.

The catalysed reaction is D-ribulose 5-phosphate = (2S)-2-hydroxy-3-oxobutyl phosphate + formate + H(+). Its pathway is cofactor biosynthesis; riboflavin biosynthesis; 2-hydroxy-3-oxobutyl phosphate from D-ribulose 5-phosphate: step 1/1. Functionally, catalyzes the conversion of D-ribulose 5-phosphate to formate and 3,4-dihydroxy-2-butanone 4-phosphate. This chain is 3,4-dihydroxy-2-butanone 4-phosphate synthase, found in Baumannia cicadellinicola subsp. Homalodisca coagulata.